A 160-amino-acid chain; its full sequence is Dihydrofolate reductase (160 aa).

The 160-residue stretch at 1–160 (MLIAIWAMTQ…NVNYYRKKQQ (160 aa)) folds into the DHFR domain. Residue 5 to 7 (IWA) participates in substrate binding. Residues 6–7 (WA) and 14–19 (IGNNNT) each bind NADP(+). Glu-27 provides a ligand contact to substrate. 43–46 (GRKT) serves as a coordination point for NADP(+). Position 57 (Arg-57) interacts with substrate. Residues 62–65 (LSKD) and 101–106 (CGGKSV) each bind NADP(+). Position 120 (Ser-120) interacts with substrate.

It belongs to the dihydrofolate reductase family.

It carries out the reaction (6S)-5,6,7,8-tetrahydrofolate + NADP(+) = 7,8-dihydrofolate + NADPH + H(+). It participates in cofactor biosynthesis; tetrahydrofolate biosynthesis; 5,6,7,8-tetrahydrofolate from 7,8-dihydrofolate: step 1/1. Functionally, key enzyme in folate metabolism. Catalyzes an essential reaction for de novo glycine and purine synthesis, and for DNA precursor synthesis. The polypeptide is Dihydrofolate reductase (folA) (Mycoplasma genitalium (strain ATCC 33530 / DSM 19775 / NCTC 10195 / G37) (Mycoplasmoides genitalium)).